We begin with the raw amino-acid sequence, 513 residues long: Putative ribose/galactose/methyl galactoside import ATP-binding protein 2 (513 aa).

ABC transporter domains lie at 24–260 (LSAE…VGRE) and 270–510 (VPIG…VMEL). 56–63 (GENGAGKS) provides a ligand contact to ATP.

This sequence belongs to the ABC transporter superfamily. Carbohydrate importer 2 (CUT2) (TC 3.A.1.2) family.

It is found in the cell inner membrane. The catalysed reaction is D-ribose(out) + ATP + H2O = D-ribose(in) + ADP + phosphate + H(+). It carries out the reaction D-galactose(out) + ATP + H2O = D-galactose(in) + ADP + phosphate + H(+). Functionally, part of an ABC transporter complex involved in carbohydrate import. Could be involved in ribose, galactose and/or methyl galactoside import. Responsible for energy coupling to the transport system. The polypeptide is Putative ribose/galactose/methyl galactoside import ATP-binding protein 2 (Rhizobium etli (strain ATCC 51251 / DSM 11541 / JCM 21823 / NBRC 15573 / CFN 42)).